Here is a 776-residue protein sequence, read N- to C-terminus: MNKKILQILEYDKVKEQFMNALTTAQGQQELKDLKPLTDKEKIQLLFDEVADFRLLTQENGLLNLGKTNDLTEILRRLELEASLSGKEFVEIKKVIQLGINIQRFFDEAENVETPSLAITLEKLVDLSALVKKLEIFDNAGSLYDNASLELMHIRASIKSHQSEIRKIMQEMLTKNLSSLSENVITIRNDRQVLPVKAENKNKIAGVVHDMSASGQTLYIEPNAVVSLNNKLNQKRIEERQEITRIYRELASQLKPYSFDIRQNAWLIGHIDFVRAKYLYLAANKATLPELTTDKDITLFAARHPLIEAKIVVTNDIKFDAGLNTIVITGPNTGGKTITLKTVGLLTILAQSGLPILAADGSRIHLFDDIFADIGDEQSIEQSLSTFSSHMTNIVHILAQADENSLVLFDELGAGTDPKEGAALAIAILENLRERNVKTMASTHYPELKAYGVETQRVINASMEFNIDKMQPTYHLQLGVPGRSNALEISRRLGLPETIISVASQQISDSEHDVNQMIEKLEEKTREVIESSRNIKKIERENQSLHKDLTKVYNQINREREFELEKAQKEAQEVVKKASLEAQEILKNLNDKAALKPHEIIAARKELEGLAPTIDFSKNKVLKKAKAQRGLKQGAEVNVTSYGQRGKLIRLEKDGRWTVQMGSITTRLNEDEFEVIESPEQIQAKTKNVSKKVTSKVKAQLDLRGMRYEEAELELDNYIDQALLANLIQITIVHGIGTGVIREMVQKKLQKHRHIKSYEYAPINAGGSGATIAILK.

330-337 (GPNTGGKT) is an ATP binding site. The Smr domain occupies 701-776 (LDLRGMRYEE…GSGATIAILK (76 aa)).

The protein belongs to the DNA mismatch repair MutS family. MutS2 subfamily. Homodimer. Binds to stalled ribosomes, contacting rRNA.

Its function is as follows. Endonuclease that is involved in the suppression of homologous recombination and thus may have a key role in the control of bacterial genetic diversity. In terms of biological role, acts as a ribosome collision sensor, splitting the ribosome into its 2 subunits. Detects stalled/collided 70S ribosomes which it binds and splits by an ATP-hydrolysis driven conformational change. Acts upstream of the ribosome quality control system (RQC), a ribosome-associated complex that mediates the extraction of incompletely synthesized nascent chains from stalled ribosomes and their subsequent degradation. Probably generates substrates for RQC. The polypeptide is Endonuclease MutS2 (Lactococcus lactis subsp. lactis (strain IL1403) (Streptococcus lactis)).